A 458-amino-acid chain; its full sequence is O-acetyltransferase dmxR13 (458 aa).

A disordered region spans residues 211–231 (ELARQISQPRPPPSSDGPPPP). A compositionally biased stretch (pro residues) spans 219 to 231 (PRPPPSSDGPPPP).

Belongs to the trichothecene 3-O-acetyltransferase family.

Its pathway is secondary metabolite biosynthesis. Functionally, O-acetyltransferase; part of the gene cluster that mediates the biosynthesis of the dimeric xanthones cryptosporioptides. The pathway begins with the synthesis of atrochrysone thioester by the polyketide synthase dmx-nrPKS. The atrochrysone carboxyl ACP thioesterase dmxR1 then breaks the thioester bond and releases the atrochrysone carboxylic acid from dmx-nrPKS. Atrochrysone carboxylic acid is decarboxylated by the decarboxylase dmxR15, and oxidized by the anthrone oxygenase dmxR16 to yield emodin. Emodin is then reduced to emodin hydroquinone by the oxidoreductase dmxR7. A-ring reduction by the short chain dehydrogenase dmxR18, dehydration by the scytalone dehydratase-like protein dmxR17 and probable spontaneous re-oxidation, results in overall deoxygenation to chrysophanol. Baeyer-Villiger oxidation by the Baeyer-Villiger monooxygenase (BVMO) dmxR6 then yields monodictylactone in equilibrium with monodictyphenone. In the case of the cryptosporioptides biosynthesis, monodictylactone is reduced at C-12 to an alcohol (by the short chain dehydrogenases dmxR12 or dmxR8) and hydroxylated at C-5 by dmxR9, yielding the electron-rich aromatic which could eliminate H(2)O to form the ortho-quinonemethide, followed by tautomerisation to paraquinone and complete the formal reduction to produce the 10-methylgroup. Conjugate addition of C-4a-OH to the resulting paraquinone by the monooxygenase dmxR10 then gives cyclohexadienone, which is then reduced at C-5 by the short chain dehydrogenase dmxR3 to give the dihydroxanthone. The 6,7-epoxide in the cryptosporioptides could be introduced by the cytochrome P450 monooxygenase dmxL3. The highly reducing PKS dmxL2 manufactures butyrate, which is further carboxylated by dmxL1 to form ethylmalonate. It is not yet clear whether the carboxylation occurs while the butyrate is attached to the ACP of dmxL2, but this unusual fungal metabolite could then be esterified to O-5 by the O-acetyltransferase dmxR13. Finally, dimerization performed by dmxR5 gives the observed dimers cryptosporioptides A, B and C as the final products of the pathway. The sequence is that of O-acetyltransferase dmxR13 from Cryptosporiopsis sp. (strain 8999).